Reading from the N-terminus, the 353-residue chain is N6-methyladenosine RNA demethylase ALKB1 (353 aa).

One can recognise a Fe2OG dioxygenase domain in the interval 223-352 (IAQAAIVNFY…RINLNVRQMR (130 aa)). Fe cation-binding residues include H241, D243, and H308. R343 serves as a coordination point for 2-oxoglutarate.

This sequence belongs to the alkB family. The cofactor is Fe(2+).

It localises to the cytoplasm. Its subcellular location is the P-body. It catalyses the reaction an N(6)-methyladenosine in mRNA + 2-oxoglutarate + O2 = an adenosine in mRNA + formaldehyde + succinate + CO2. RNA demethylase that regulates the stability of mRNAs through an m(6)A-dependent manner. M6A is a modification present at internal sites of mRNAs and some non-coding RNAs and plays a role in mRNA stability and processing. Plays a role in pathogenicity towards plant host. The polypeptide is N6-methyladenosine RNA demethylase ALKB1 (Pyricularia oryzae (strain 70-15 / ATCC MYA-4617 / FGSC 8958) (Rice blast fungus)).